Consider the following 192-residue polypeptide: Large ribosomal subunit protein bL9 (192 aa).

Residues 173-192 (ALRPEDFFDPEADGVDEDEA) are disordered. A compositionally biased stretch (acidic residues) spans 179-192 (FFDPEADGVDEDEA).

It belongs to the bacterial ribosomal protein bL9 family.

Its function is as follows. Binds to the 23S rRNA. This Rhizobium leguminosarum bv. trifolii protein is Large ribosomal subunit protein bL9 (rplI).